Here is a 100-residue protein sequence, read N- to C-terminus: Secreted protein of Ly-6 domain 1 (100 aa).

The signal sequence occupies residues 1–22 (MAKCLLLLLLVVLSSLLGLPQA). A UPAR/Ly6 domain is found at 23 to 100 (LECFQCNRVN…CHDSPLCNKF (78 aa)). Intrachain disulfides connect Cys25–Cys52, Cys28–Cys37, Cys44–Cys70, Cys74–Cys90, and Cys91–Cys97. Asn60 is a glycosylation site (N-linked (GlcNAc...) asparagine).

Post-translationally, glycosylated. Expressed in placenta, where it is detected in both fetal tissues (cotyledon and intercotyledon) and maternal tissues (caruncle and intercaruncular endometrium) (at protein level). Expressed in the mesenchyme area of villi in the cotyledon (at protein level). In endometrium, expressed in the luminal epithelium and weakly in the subluminal stroma (at protein level). Detected in trophoblast mononucleate cells (TMCs) (at protein level). Also detected in trophoblast binucleate cells (BNCs). Overall, expression is strongest in fetal tissue and lower in maternal tissue. Not detected in other tissues tested.

Its subcellular location is the secreted. Functionally, binds specifically to type I collagen. This chain is Secreted protein of Ly-6 domain 1, found in Bos taurus (Bovine).